The primary structure comprises 698 residues: Protein arginine N-methyltransferase 7 (698 aa).

SAM-dependent MTase PRMT-type domains are found at residues glutamine 14 to tryptophan 357 and glutamate 366 to glutamate 698.

It belongs to the class I-like SAM-binding methyltransferase superfamily. Protein arginine N-methyltransferase family. PRMT7 subfamily.

Functionally, essential arginine methyltransferase that can both catalyze the formation of omega-N monomethylarginine (MMA) and symmetrical dimethylarginine (sDMA). Specifically mediates the symmetrical dimethylation of arginine residues in the small nuclear ribonucleoproteins SmD1 and SmD3. This Drosophila mojavensis (Fruit fly) protein is Protein arginine N-methyltransferase 7 (Art7).